A 729-amino-acid polypeptide reads, in one-letter code: Fatty acid oxidation complex subunit alpha (729 aa).

The tract at residues 1-189 is enoyl-CoA hydratase/isomerase; sequence MLYKGDTLYV…KIGLIDGIVK (189 aa). Asp-296 is a binding site for substrate. The 3-hydroxyacyl-CoA dehydrogenase stretch occupies residues 311–729; sequence EMPKQAAVLG…ARPVGALKTA (419 aa). NAD(+) is bound by residues Met-324, Asp-343, 400-402, Lys-407, and Ser-429; that span reads VVE. His-450 functions as the For 3-hydroxyacyl-CoA dehydrogenase activity in the catalytic mechanism. Residue Asn-453 participates in NAD(+) binding. Substrate contacts are provided by Asn-500 and Tyr-660. The tract at residues 708-729 is disordered; the sequence is RHNEPYYPPVEPARPVGALKTA.

In the N-terminal section; belongs to the enoyl-CoA hydratase/isomerase family. This sequence in the C-terminal section; belongs to the 3-hydroxyacyl-CoA dehydrogenase family. Heterotetramer of two alpha chains (FadB) and two beta chains (FadA).

It catalyses the reaction a (3S)-3-hydroxyacyl-CoA + NAD(+) = a 3-oxoacyl-CoA + NADH + H(+). It carries out the reaction a (3S)-3-hydroxyacyl-CoA = a (2E)-enoyl-CoA + H2O. The enzyme catalyses a 4-saturated-(3S)-3-hydroxyacyl-CoA = a (3E)-enoyl-CoA + H2O. The catalysed reaction is (3S)-3-hydroxybutanoyl-CoA = (3R)-3-hydroxybutanoyl-CoA. It catalyses the reaction a (3Z)-enoyl-CoA = a 4-saturated (2E)-enoyl-CoA. It carries out the reaction a (3E)-enoyl-CoA = a 4-saturated (2E)-enoyl-CoA. Its pathway is lipid metabolism; fatty acid beta-oxidation. Involved in the aerobic and anaerobic degradation of long-chain fatty acids via beta-oxidation cycle. Catalyzes the formation of 3-oxoacyl-CoA from enoyl-CoA via L-3-hydroxyacyl-CoA. It can also use D-3-hydroxyacyl-CoA and cis-3-enoyl-CoA as substrate. The protein is Fatty acid oxidation complex subunit alpha of Enterobacter sp. (strain 638).